A 1350-amino-acid chain; its full sequence is Nicotinate hydroxylase hnxS (1350 aa).

6 residues coordinate [2Fe-2S] cluster: Cys49, Cys54, Cys89, Cys92, Cys133, and Cys135. Residues 164-193 form a disordered region; it reads LVGTEEETESDMGAHSGSGDTGSRSSGSCG. Low complexity predominate over residues 180-192; that stretch reads GSGDTGSRSSGSC. The region spanning 256–445 is the FAD-binding PCMH-type domain; the sequence is YGDAEQAWVK…TKIAVPMPSK (190 aa). Residues 284–291, 379–383, Asp392, and Lys455 contribute to the FAD site; these read LVTGASEV and CLAGN. The Mo-molybdopterin site is built by Gln793 and Phe824. Substrate is bound by residues Glu828 and Arg906. 2 residues coordinate Mo-molybdopterin: Arg938 and Ala1107. The active-site Proton acceptor is Glu1281.

It belongs to the xanthine dehydrogenase family. The cofactor is [2Fe-2S] cluster. FAD serves as cofactor. Mo-molybdopterin is required as a cofactor.

With respect to regulation, allopurinol inhibits catalytic activity in a linear fashion. Functionally, nicotinate hydroxylase, part of the hnx cluster involved in the purine degradation. The nicotinate hydroxylase hnxS accepts nicotinate as a substrate and catalyzes the first step of nicotinate catabolism. HnxS also accepts hypoxanthine, but not xanthine, as a substrate. The major facilitator-type transporters hxnP and hxnZ are probably involved in the uptake of nicotinate-derived metabolites, and the oxidoreductases hxnT and hxnY in the further metabolism of 6-OH nicotinic acid. The protein is Nicotinate hydroxylase hnxS of Emericella nidulans (strain FGSC A4 / ATCC 38163 / CBS 112.46 / NRRL 194 / M139) (Aspergillus nidulans).